Reading from the N-terminus, the 638-residue chain is Chaperone protein DnaK (638 aa).

The residue at position 197 (T197) is a Phosphothreonine; by autocatalysis. The segment at 600 to 638 is disordered; the sequence is SGAQGGAQAGPGAGAGQQANQGSSNNKEDIQDADFEEVK. A compositionally biased stretch (gly residues) spans 602 to 614; the sequence is AQGGAQAGPGAGA. A compositionally biased stretch (low complexity) spans 615–624; the sequence is GQQANQGSSN. Over residues 625–638 the composition is skewed to basic and acidic residues; that stretch reads NKEDIQDADFEEVK.

This sequence belongs to the heat shock protein 70 family.

Its function is as follows. Acts as a chaperone. This chain is Chaperone protein DnaK, found in Phocaeicola vulgatus (strain ATCC 8482 / DSM 1447 / JCM 5826 / CCUG 4940 / NBRC 14291 / NCTC 11154) (Bacteroides vulgatus).